Reading from the N-terminus, the 73-residue chain is UPF0270 protein PMI2817 (73 aa).

It belongs to the UPF0270 family.

This chain is UPF0270 protein PMI2817, found in Proteus mirabilis (strain HI4320).